A 272-amino-acid polypeptide reads, in one-letter code: SPbeta prophage-derived aminoglycoside N(3')-acetyltransferase-like protein YokD (272 aa).

CoA contacts are provided by residues 38 to 44 and Q113; that span reads LSSIGWV.

Belongs to the antibiotic N-acetyltransferase family. In terms of assembly, homodimer.

In terms of biological role, may contribute to antibiotic resistance. This Bacillus subtilis (strain 168) protein is SPbeta prophage-derived aminoglycoside N(3')-acetyltransferase-like protein YokD (yokD).